Reading from the N-terminus, the 1463-residue chain is Secretory phospholipase A2 receptor (1463 aa).

The signal sequence occupies residues 1 to 20 (MPLLSLSLLLLLLQVPAGSA). Residues 21 to 1392 (ETAAWAVTPE…IHTVKKHPGK (1372 aa)) lie on the Extracellular side of the membrane. The 78-residue stretch at 38 to 115 (KGIFIIQSEN…CDSTHVSLKW (78 aa)) folds into the Ricin B-type lectin domain. N-linked (GlcNAc...) asparagine glycosylation is present at Asn93. A Fibronectin type-II domain is found at 173-221 (AHGTPCMFPFQYNQQWHHECTREGREDNLLWCATTSRYERDEKWGFCPD). 16 disulfide bridges follow: Cys178–Cys204, Cys192–Cys219, Cys260–Cys354, Cys330–Cys346, Cys406–Cys501, Cys478–Cys493, Cys617–Cys634, Cys699–Cys796, Cys774–Cys788, Cys840–Cys938, Cys915–Cys930, Cys992–Cys1096, Cys1068–Cys1088, Cys1209–Cys1223, Cys1280–Cys1377, and Cys1354–Cys1369. C-type lectin domains are found at residues 229–353 (CDAV…LPYV), 357–500 (YLNP…LFYL), 504–641 (TGLV…KAMS), 646–795 (PVEN…REWI), 799–937 (PRDV…MPSI), 941–1095 (KKVW…YGFV), 1099–1230 (MQDA…LQGA), and 1235–1376 (PTET…KGFI). N-linked (GlcNAc...) asparagine glycosylation is present at Asn454. A glycan (N-linked (GlcNAc...) asparagine) is linked at Asn1057. Residues 1393–1421 (GPSHSVIPLTVALTLLVILAISTLSFCMY) form a helical membrane-spanning segment. Residues 1422–1463 (KHSHIIFGRLAQFRNPYYPSANFSTVHLEENILISDLEKNDQ) lie on the Cytoplasmic side of the membrane. The Endocytosis signal signature appears at 1436–1442 (NPYYPSA).

In terms of assembly, interacts with sPLA2-IB/PLA2G1B; this interaction mediates intracellular signaling as well as clearance of extracellular sPLA2-IB/PLA2G1B via endocytotic pathway. Interacts with sPLA2-X/PLA2G10; this interaction mediates sPLA2-X/PLA2G10 clearance and inactivation. The secretory phospholipase A2 receptor form may be produced by the action of metalloproteinases. It contains all extracellular domains and only lacks transmembrane and cytosolic regions. It is however unclear whether this form is produced by proteolytic cleavage as suggested by some experiments, or by alternative splicing.

Its subcellular location is the cell membrane. It is found in the secreted. In terms of biological role, receptor for secretory phospholipase A2 (sPLA2). Also able to bind to snake PA2-like toxins. Although its precise function remains unclear, binding of sPLA2 to its receptor participates in both positive and negative regulation of sPLA2 functions as well as clearance of sPLA2. Binding of sPLA2-IB/PLA2G1B induces various effects depending on the cell type, such as activation of the mitogen-activated protein kinase (MAPK) cascade to induce cell proliferation, the production of lipid mediators, selective release of arachidonic acid in bone marrow-derived mast cells. In neutrophils, binding of sPLA2-IB/PLA2G1B can activate p38 MAPK to stimulate elastase release and cell adhesion. May be involved in responses in pro-inflammatory cytokine productions during endotoxic shock. Also has endocytic properties and rapidly internalizes sPLA2 ligands, which is particularly important for the clearance of extracellular sPLA2s to protect their potent enzymatic activities. The soluble secretory phospholipase A2 receptor form is circulating and acts as a negative regulator of sPLA2 functions by blocking the biological functions of sPLA2-IB/PLA2G1B and sPLA2-X/PLA2G10. The sequence is that of Secretory phospholipase A2 receptor (PLA2R1) from Bos taurus (Bovine).